The following is a 475-amino-acid chain: MRDYTKQYINGEWVESNSNETIEVINPATEEVIGKVAKGNKADVDKAVEAADNAYLEFRHTSVKERQALLDKIVKEYENRKDDIVQAITDELGAPLSLSERVHYQMGLNHFVAARDALDNYEFEERRGDDLVVKEAIGVSGLITPWNFPTNQTSLKLAAAFATGSPVVLKPSEETPFAAVILAEIFDKVGVPKGVFNLVNGDGAGVGNPLSEHPKVRMMSFTGSGPTGSKIMEKAAKDFKKVSLELGGKSPYIVLDDVDIKEAAKATTGKVVNNTGQVCTAGTRVLVPNKIKDAFLAELKEQFSQVRVGNPREDGTQVGPMISKKQFDQVQNYINKGIEEGAELFYGGPGKPEGLEKGYFARPTIFINVDNQMTIAQEEIFGPVMSVITYNDLDEAIQIANDTKYGLAGYVIGKDKETLHKVARSIEAGTVEINEAGRKPDLPFGGYKQSGLGREWGDYGIEEFLEVKSIAGYFK.

Residues W146–N147 and G223–S224 each bind NAD(+). E245 (proton acceptor) is an active-site residue. L246 lines the NAD(+) pocket. Residue C279 is the Nucleophile of the active site. NAD(+) is bound at residue E379.

It belongs to the aldehyde dehydrogenase family.

The enzyme catalyses an aldehyde + NAD(+) + H2O = a carboxylate + NADH + 2 H(+). In Staphylococcus aureus (strain bovine RF122 / ET3-1), this protein is Putative aldehyde dehydrogenase.